Reading from the N-terminus, the 190-residue chain is MIDPDGYRPNVGIVLIRRDGQVFWGRRVRRDGWQFPQGGMHSDETPVEAMYRELNEETGLLPEHVQLVGATPGWLRYRLPSQAVRCNRSQMCIGQKQVWFLLQLIGDESHVQLDQSENPEFDHWRWVSFWYPIEHVVMFKRSVYARALCQLASLAQQVVGLEVGTMPQYVQDICLLNVGYKHLPNWVSRY.

Residues 6–149 enclose the Nudix hydrolase domain; sequence GYRPNVGIVL…KRSVYARALC (144 aa). The Nudix box motif lies at 38–59; the sequence is GGMHSDETPVEAMYRELNEETG.

Belongs to the Nudix hydrolase family. RppH subfamily. Requires a divalent metal cation as cofactor.

Its function is as follows. Accelerates the degradation of transcripts by removing pyrophosphate from the 5'-end of triphosphorylated RNA, leading to a more labile monophosphorylated state that can stimulate subsequent ribonuclease cleavage. This Xylella fastidiosa (strain Temecula1 / ATCC 700964) protein is RNA pyrophosphohydrolase.